A 98-amino-acid polypeptide reads, in one-letter code: NADH-ubiquinone oxidoreductase chain 4L (98 aa).

Helical transmembrane passes span 1–21 (MAPI…GVLI), 28–48 (STLL…TLLI), and 59–79 (APLI…ALLV).

It belongs to the complex I subunit 4L family. Core subunit of respiratory chain NADH dehydrogenase (Complex I) which is composed of 45 different subunits.

Its subcellular location is the mitochondrion inner membrane. The enzyme catalyses a ubiquinone + NADH + 5 H(+)(in) = a ubiquinol + NAD(+) + 4 H(+)(out). Its function is as follows. Core subunit of the mitochondrial membrane respiratory chain NADH dehydrogenase (Complex I) which catalyzes electron transfer from NADH through the respiratory chain, using ubiquinone as an electron acceptor. Part of the enzyme membrane arm which is embedded in the lipid bilayer and involved in proton translocation. This is NADH-ubiquinone oxidoreductase chain 4L (MT-ND4L) from Isoodon macrourus (Short-nosed bandicoot).